Reading from the N-terminus, the 365-residue chain is DNA replication and repair protein RecF (365 aa).

Residue 30–37 (GRNAQGKT) coordinates ATP.

The protein belongs to the RecF family.

It is found in the cytoplasm. Functionally, the RecF protein is involved in DNA metabolism; it is required for DNA replication and normal SOS inducibility. RecF binds preferentially to single-stranded, linear DNA. It also seems to bind ATP. The sequence is that of DNA replication and repair protein RecF from Streptococcus pneumoniae serotype 4 (strain ATCC BAA-334 / TIGR4).